We begin with the raw amino-acid sequence, 490 residues long: MTQWEVVIGLETHAQLSTVSKIFSGASTQFGAQPNTQACPVDLALPGVLPVLNRGAVERAIRFGLAIGATVAPRSVFARKNYFYPDLPKGYQISQYEIPVVQGGQITIQVPANEKAGKQAYSKTVNLTRAHLEEDAGKSLHEDFAGMTGIDLNRAGTPLLEIVTEPEMRSAAEAVAYAKALHGLVMWLGICDGNMQEGSFRCDANVSVRPVGQEKFGTRAEIKNLNSFRFLEDAINYEVRRQIELIEDGGEVVQETRLYDPDKRETRSMRSKEDAHDYRYFPDPDLMPLVIGADWIARVKGEMPELPAVMQQRFIEQYGVSAYDAGVLTSTKAMAEYFEALVAKAGAANAKLAANWLMGDVSSQLNRDGIDIDACPVSAAQLALVLQRIADGTISNKIAKEIFVTIWDEKAADEGAADRIIEAKGLKQISDTGALEAIIDEVLAANAKSVEEFRAGKDKAFNALVGQAMKATKGKANPQQVNELLKKKLG.

Belongs to the GatB/GatE family. GatB subfamily. In terms of assembly, heterotrimer of A, B and C subunits.

It catalyses the reaction L-glutamyl-tRNA(Gln) + L-glutamine + ATP + H2O = L-glutaminyl-tRNA(Gln) + L-glutamate + ADP + phosphate + H(+). It carries out the reaction L-aspartyl-tRNA(Asn) + L-glutamine + ATP + H2O = L-asparaginyl-tRNA(Asn) + L-glutamate + ADP + phosphate + 2 H(+). Its function is as follows. Allows the formation of correctly charged Asn-tRNA(Asn) or Gln-tRNA(Gln) through the transamidation of misacylated Asp-tRNA(Asn) or Glu-tRNA(Gln) in organisms which lack either or both of asparaginyl-tRNA or glutaminyl-tRNA synthetases. The reaction takes place in the presence of glutamine and ATP through an activated phospho-Asp-tRNA(Asn) or phospho-Glu-tRNA(Gln). In Burkholderia mallei (strain NCTC 10247), this protein is Aspartyl/glutamyl-tRNA(Asn/Gln) amidotransferase subunit B.